The sequence spans 123 residues: Small ribosomal subunit protein uS11 (123 aa).

The protein belongs to the universal ribosomal protein uS11 family. Part of the 30S ribosomal subunit. Interacts with proteins S7 and S18. Binds to IF-3.

Located on the platform of the 30S subunit, it bridges several disparate RNA helices of the 16S rRNA. Forms part of the Shine-Dalgarno cleft in the 70S ribosome. The polypeptide is Small ribosomal subunit protein uS11 (Coxiella burnetii (strain RSA 331 / Henzerling II)).